We begin with the raw amino-acid sequence, 214 residues long: tRNA (guanine-N(7)-)-methyltransferase (214 aa).

4 residues coordinate S-adenosyl-L-methionine: glutamate 43, glutamate 68, aspartate 95, and aspartate 117. The active site involves aspartate 117. Residues lysine 121, aspartate 153, and 190 to 193 (TEYE) each bind substrate.

The protein belongs to the class I-like SAM-binding methyltransferase superfamily. TrmB family.

It carries out the reaction guanosine(46) in tRNA + S-adenosyl-L-methionine = N(7)-methylguanosine(46) in tRNA + S-adenosyl-L-homocysteine. The protein operates within tRNA modification; N(7)-methylguanine-tRNA biosynthesis. Catalyzes the formation of N(7)-methylguanine at position 46 (m7G46) in tRNA. This Staphylococcus aureus (strain USA300) protein is tRNA (guanine-N(7)-)-methyltransferase.